The chain runs to 185 residues: ATP synthase subunit b 1 (185 aa).

Residues 4-24 (TLAIALTLATTSPAFAAGGGW) form a helical membrane-spanning segment.

Belongs to the ATPase B chain family. As to quaternary structure, F-type ATPases have 2 components, F(1) - the catalytic core - and F(0) - the membrane proton channel. F(1) has five subunits: alpha(3), beta(3), gamma(1), delta(1), epsilon(1). F(0) has three main subunits: a(1), b(2) and c(10-14). The alpha and beta chains form an alternating ring which encloses part of the gamma chain. F(1) is attached to F(0) by a central stalk formed by the gamma and epsilon chains, while a peripheral stalk is formed by the delta and b chains.

Its subcellular location is the cell inner membrane. In terms of biological role, f(1)F(0) ATP synthase produces ATP from ADP in the presence of a proton or sodium gradient. F-type ATPases consist of two structural domains, F(1) containing the extramembraneous catalytic core and F(0) containing the membrane proton channel, linked together by a central stalk and a peripheral stalk. During catalysis, ATP synthesis in the catalytic domain of F(1) is coupled via a rotary mechanism of the central stalk subunits to proton translocation. Its function is as follows. Component of the F(0) channel, it forms part of the peripheral stalk, linking F(1) to F(0). This is ATP synthase subunit b 1 from Ruegeria sp. (strain TM1040) (Silicibacter sp.).